Reading from the N-terminus, the 515-residue chain is Sterol 14-alpha demethylase cyp51A (515 aa).

A helical transmembrane segment spans residues 7 to 29; that stretch reads LTAYMAVAVLTAILLNVVYQLFF. N-linked (GlcNAc...) asparagine glycans are attached at residues asparagine 33 and asparagine 269. Cysteine 454 serves as a coordination point for heme. A glycan (N-linked (GlcNAc...) asparagine) is linked at asparagine 512.

This sequence belongs to the cytochrome P450 family. The cofactor is heme.

The protein localises to the endoplasmic reticulum membrane. The enzyme catalyses a 14alpha-methyl steroid + 3 reduced [NADPH--hemoprotein reductase] + 3 O2 = a Delta(14) steroid + formate + 3 oxidized [NADPH--hemoprotein reductase] + 4 H2O + 4 H(+). It catalyses the reaction a 14alpha-methyl steroid + reduced [NADPH--hemoprotein reductase] + O2 = a 14alpha-hydroxymethyl steroid + oxidized [NADPH--hemoprotein reductase] + H2O + H(+). It carries out the reaction a 14alpha-hydroxymethyl steroid + reduced [NADPH--hemoprotein reductase] + O2 = a 14alpha-formyl steroid + oxidized [NADPH--hemoprotein reductase] + 2 H2O + H(+). The catalysed reaction is a 14alpha-formyl steroid + reduced [NADPH--hemoprotein reductase] + O2 = a Delta(14) steroid + formate + oxidized [NADPH--hemoprotein reductase] + H2O + 2 H(+). The enzyme catalyses lanosterol + 3 reduced [NADPH--hemoprotein reductase] + 3 O2 = 4,4-dimethyl-5alpha-cholesta-8,14,24-trien-3beta-ol + formate + 3 oxidized [NADPH--hemoprotein reductase] + 4 H2O + 4 H(+). It catalyses the reaction lanosterol + reduced [NADPH--hemoprotein reductase] + O2 = 32-hydroxylanosterol + oxidized [NADPH--hemoprotein reductase] + H2O + H(+). It carries out the reaction 32-hydroxylanosterol + reduced [NADPH--hemoprotein reductase] + O2 = 32-oxolanosterol + oxidized [NADPH--hemoprotein reductase] + 2 H2O + H(+). The catalysed reaction is 32-oxolanosterol + reduced [NADPH--hemoprotein reductase] + O2 = 4,4-dimethyl-5alpha-cholesta-8,14,24-trien-3beta-ol + formate + oxidized [NADPH--hemoprotein reductase] + H2O + 2 H(+). The enzyme catalyses eburicol + 3 reduced [NADPH--hemoprotein reductase] + 3 O2 = 14-demethyleburicol + formate + 3 oxidized [NADPH--hemoprotein reductase] + 4 H2O + 4 H(+). It catalyses the reaction eburicol + reduced [NADPH--hemoprotein reductase] + O2 = 32-hydroxyeburicol + oxidized [NADPH--hemoprotein reductase] + H2O + H(+). It carries out the reaction 32-hydroxyeburicol + reduced [NADPH--hemoprotein reductase] + O2 = 32-oxoeburicol + oxidized [NADPH--hemoprotein reductase] + 2 H2O + H(+). The catalysed reaction is 32-oxoeburicol + reduced [NADPH--hemoprotein reductase] + O2 = 14-demethyleburicol + formate + oxidized [NADPH--hemoprotein reductase] + H2O + 2 H(+). The protein operates within steroid metabolism; ergosterol biosynthesis. The sterol 14-alpha demethylase activity is inhibited by azole compounds. Activity is inhibited by the novel and long-acting fungicidal azole, PC1244. Functionally, sterol 14alpha-demethylase, encoded by cyp51A and cyp51B, that plays a critical role in the third module of ergosterol biosynthesis pathway, being ergosterol the major sterol component in fungal membranes that participates in a variety of functions. The third module or late pathway involves the ergosterol synthesis itself through consecutive reactions that mainly occur in the endoplasmic reticulum (ER) membrane. In filamentous fungi, during the initial step of this module, lanosterol (lanosta-8,24-dien-3beta-ol) can be metabolized to eburicol. Sterol 14alpha-demethylase catalyzes the three-step oxidative removal of the 14alpha-methyl group (C-32) of both these sterols in the form of formate, and converts eburicol and lanosterol to 14-demethyleburicol (4,4,24-trimethylergosta-8,14,24(28)-trienol) and 4,4-dimethyl-5alpha-cholesta-8,14,24-trien-3beta-ol, respectively, which are further metabolized by other enzymes in the pathway to ergosterol. Can also use substrates not intrinsic to fungi, such as 24,25-dihydrolanosterol (DHL), producing 4,4'-dimethyl-8,14-cholestadien-3-beta-ol, but at lower rates than the endogenous substrates. Its function is as follows. As a target of azole drugs, plays a crucial role in azole susceptibility. In Aspergillus fumigatus (strain ATCC MYA-4609 / CBS 101355 / FGSC A1100 / Af293) (Neosartorya fumigata), this protein is Sterol 14-alpha demethylase cyp51A.